The following is a 351-amino-acid chain: UDP-3-O-acylglucosamine N-acyltransferase (351 aa).

Histidine 240 (proton acceptor) is an active-site residue.

This sequence belongs to the transferase hexapeptide repeat family. LpxD subfamily. Homotrimer.

It carries out the reaction a UDP-3-O-[(3R)-3-hydroxyacyl]-alpha-D-glucosamine + a (3R)-hydroxyacyl-[ACP] = a UDP-2-N,3-O-bis[(3R)-3-hydroxyacyl]-alpha-D-glucosamine + holo-[ACP] + H(+). It functions in the pathway bacterial outer membrane biogenesis; LPS lipid A biosynthesis. In terms of biological role, catalyzes the N-acylation of UDP-3-O-acylglucosamine using 3-hydroxyacyl-ACP as the acyl donor. Is involved in the biosynthesis of lipid A, a phosphorylated glycolipid that anchors the lipopolysaccharide to the outer membrane of the cell. The sequence is that of UDP-3-O-acylglucosamine N-acyltransferase from Pseudomonas entomophila (strain L48).